We begin with the raw amino-acid sequence, 241 residues long: MTASADIRLSDVRFSYGETAMHFDVTITGGEIAAIVGPSGSGKSTFLNLIAGFETPQSGIISINGVDVTHLPLADRPVSMVFQENNLFAHLTVEQNVDLGRSPNLRLNEEDRKAVASALARVGLQGKEKRKPEALSGGERQRVAIARVLVRERPVLLLDEAFASLGPALRHQMLDLVNKLRRETGMTVLMVTHTPEDALHLDALLIFLDNGKIAAQGPATEMLSRAGPEALRHYIGEMRSF.

The 229-residue stretch at 7-235 (IRLSDVRFSY…AGPEALRHYI (229 aa)) folds into the ABC transporter domain. 37-44 (GPSGSGKS) is a binding site for ATP.

Belongs to the ABC transporter superfamily. Thiamine importer (TC 3.A.1.19.1) family. In terms of assembly, the complex is composed of two ATP-binding proteins (ThiQ), two transmembrane proteins (ThiP) and a solute-binding protein (ThiB).

Its subcellular location is the cell inner membrane. It carries out the reaction thiamine(out) + ATP + H2O = thiamine(in) + ADP + phosphate + H(+). Its function is as follows. Part of the ABC transporter complex ThiBPQ involved in thiamine import. Responsible for energy coupling to the transport system. The sequence is that of Thiamine import ATP-binding protein ThiQ from Brucella abortus biovar 1 (strain 9-941).